The chain runs to 545 residues: Membrane protein insertase YidC (545 aa).

The next 4 membrane-spanning stretches (helical) occupy residues 350-370 (IIGNWGWAIIVLTIIVKAVLY), 424-444 (LPMLLQIPVFIGLYWALFASV), 461-481 (ADPYYILPIIMAATMFAQTYL), and 498-518 (PLVFSVMFFFFPAGLVLYWVV).

It belongs to the OXA1/ALB3/YidC family. Type 1 subfamily. As to quaternary structure, interacts with the Sec translocase complex via SecD. Specifically interacts with transmembrane segments of nascent integral membrane proteins during membrane integration.

The protein resides in the cell inner membrane. Required for the insertion and/or proper folding and/or complex formation of integral membrane proteins into the membrane. Involved in integration of membrane proteins that insert both dependently and independently of the Sec translocase complex, as well as at least some lipoproteins. Aids folding of multispanning membrane proteins. The protein is Membrane protein insertase YidC of Neisseria meningitidis serogroup C (strain 053442).